The sequence spans 908 residues: 3-phosphoinositide-dependent protein kinase B (908 aa).

3 stretches are compositionally biased toward low complexity: residues 53–170 (NNNF…SSSL), 179–189 (YSDSSDSIDSY), and 200–216 (QQQQHLQQQQDQPQPLH). The disordered stretch occupies residues 53–267 (NNNFNNNNNN…PNSSIPHKKS (215 aa)). Positions 250 to 262 (KTSSFGLQPNSSI) are enriched in polar residues. One can recognise a Protein kinase domain in the interval 271–527 (FDFIRTIGKG…ISEIKNHEFF (257 aa)). ATP is bound by residues 281–283 (AYG) and Lys300. Residues 302–346 (LNKKLIIKEKKAKYVNTEKTILDSLDNPNIVKLFYTFQDENNLYF) are PIF-pocket. Residues 349-351 (EYC) and Asp355 contribute to the ATP site. The Proton acceptor role is filled by Asp394. ATP is bound by residues Glu398 and Asp412. Disordered regions lie at residues 538-560 (SQTPPPIEQMVPQSPFPSPNSSL) and 606-755 (ISNN…KNLQ). The segment covering 607–684 (SNNNNNNNNT…PAYSSTPSST (78 aa)) has biased composition (low complexity). The segment covering 696–709 (SSCSSNNLLGKSSN) has biased composition (polar residues). Over residues 710 to 741 (QQYQPFQFHQQQQQQQQQQQRERSSTTTPSPT) the composition is skewed to low complexity. In terms of domain architecture, PH spans 764–902 (SSFSTSSPMS…KLWVDLINEL (139 aa)).

It belongs to the protein kinase superfamily. AGC Ser/Thr protein kinase family. PDPK1 subfamily.

The enzyme catalyses L-seryl-[protein] + ATP = O-phospho-L-seryl-[protein] + ADP + H(+). The catalysed reaction is L-threonyl-[protein] + ATP = O-phospho-L-threonyl-[protein] + ADP + H(+). This is 3-phosphoinositide-dependent protein kinase B (pdkB) from Dictyostelium discoideum (Social amoeba).